We begin with the raw amino-acid sequence, 169 residues long: Transcription antitermination protein NusB (169 aa).

A compositionally biased stretch (basic and acidic residues) spans 1-19 (MAEMKKTIDNKPAPKGEKK). The segment at 1–22 (MAEMKKTIDNKPAPKGEKKANR) is disordered.

It belongs to the NusB family.

Functionally, involved in transcription antitermination. Required for transcription of ribosomal RNA (rRNA) genes. Binds specifically to the boxA antiterminator sequence of the ribosomal RNA (rrn) operons. This Rhodopseudomonas palustris (strain BisB18) protein is Transcription antitermination protein NusB.